The sequence spans 219 residues: MKVILLGPPGAGKGTQAAGICERFDIPQISTGDMLRAAVKAGTPLGQQAKKVMDAGELVSDDIIMGLVKERIAEPDCANGFLFDGFPRTIAQAEGLKAEGINVDAVVEIQVPDEDIVQRMAGRRVHPGSGRVYHVEHNPPKEEGKDDVTGEPLVQRDDDQEETVRKRLGVYHEQTQPLVEYYSDWAAKGGDGAPRYIVIKGVGSVDDIRNRILSELERA.

Residue 10–15 (GAGKGT) participates in ATP binding. Positions 30 to 59 (STGDMLRAAVKAGTPLGQQAKKVMDAGELV) are NMP. Residues Thr-31, Arg-36, 57–59 (ELV), 85–88 (GFPR), and Gln-92 each bind AMP. The interval 122–159 (GRRVHPGSGRVYHVEHNPPKEEGKDDVTGEPLVQRDDD) is LID. Residues Arg-123 and 132-133 (VY) contribute to the ATP site. The disordered stretch occupies residues 129–152 (SGRVYHVEHNPPKEEGKDDVTGEP). A compositionally biased stretch (basic and acidic residues) spans 133 to 152 (YHVEHNPPKEEGKDDVTGEP). Positions 156 and 167 each coordinate AMP. Gly-203 is an ATP binding site.

It belongs to the adenylate kinase family. As to quaternary structure, monomer.

The protein resides in the cytoplasm. It catalyses the reaction AMP + ATP = 2 ADP. Its pathway is purine metabolism; AMP biosynthesis via salvage pathway; AMP from ADP: step 1/1. Its function is as follows. Catalyzes the reversible transfer of the terminal phosphate group between ATP and AMP. Plays an important role in cellular energy homeostasis and in adenine nucleotide metabolism. This Alkalilimnicola ehrlichii (strain ATCC BAA-1101 / DSM 17681 / MLHE-1) protein is Adenylate kinase.